Consider the following 383-residue polypeptide: GDSL esterase/lipase At1g28610 (383 aa).

The N-terminal stretch at 1–22 (MASLDSLVSFFLSTLFVTIVSS) is a signal peptide. Residue Ser-38 is the Nucleophile of the active site. Asn-134, Asn-184, and Asn-315 each carry an N-linked (GlcNAc...) asparagine glycan. Catalysis depends on residues Asp-340 and His-343.

Belongs to the 'GDSL' lipolytic enzyme family.

Its subcellular location is the secreted. The chain is GDSL esterase/lipase At1g28610 from Arabidopsis thaliana (Mouse-ear cress).